Consider the following 907-residue polypeptide: Catenin alpha-1 (907 aa).

Residue Thr2 is modified to N-acetylthreonine. The segment at 2-228 (TAVHAGNINF…PILYTASQAC (227 aa)) is involved in homodimerization. A Glycyl lysine isopeptide (Lys-Gly) (interchain with G-Cter in SUMO2) cross-link involves residue Lys57. The interval 97-148 (VRKQGDLMKSAAGEFADDPCSSVKRGNMVRAARALLSAVTRLLILADMADVY) is interaction with JUP and CTNNB1. A phosphoserine mark is found at Ser264, Ser268, Ser296, and Ser298. The tract at residues 326-395 (TRDDRRERIV…AVMDHVSDSF (70 aa)) is interaction with alpha-actinin. Thr635 carries the phosphothreonine modification. Position 642 is a phosphoserine (Ser642). Thr646 bears the Phosphothreonine mark. Ser653 and Ser656 each carry phosphoserine. A Phosphothreonine modification is found at Thr659. Lys798 participates in a covalent cross-link: Glycyl lysine isopeptide (Lys-Gly) (interchain with G-Cter in SUMO2). Ser852 carries the post-translational modification Phosphoserine. Residues 865-881 (PEKKPLVKREKQDETQT) are compositionally biased toward basic and acidic residues. A disordered region spans residues 865 to 895 (PEKKPLVKREKQDETQTKIKRASQKKHVNPV). The span at 882–892 (KIKRASQKKHV) shows a compositional bias: basic residues.

Belongs to the vinculin/alpha-catenin family. Monomer and homodimer; the monomer preferentially binds to CTNNB1 and the homodimer to actin. Component of an cadherin:catenin adhesion complex composed of at least of CDH26, beta-catenin/CTNNB1, alpha-catenin/CTNNA1 and p120 catenin/CTNND1. Possible component of an E-cadherin/ catenin adhesion complex together with E-cadherin/CDH1 and beta-catenin/CTNNB1 or gamma-catenin/JUP; the complex is located to adherens junctions. The stable association of CTNNA1 is controversial as CTNNA1 was shown not to bind to F-actin when assembled in the complex. Alternatively, the CTNNA1-containing complex may be linked to F-actin by other proteins such as LIMA1. Binds AFDN and F-actin. Interacts with ARHGAP21. Interacts with AJUBA. Interacts with LIMA1. Interacts with vinculin/VCL. Interacts with TJP2/ZO2 (via N-terminus). Interacts with TJP1/ZO1 (via N-terminus). Post-translationally, sumoylated. Phosphorylation seems to contribute to the strength of cell-cell adhesion rather than to the basic capacity for cell-cell adhesion.

It localises to the cytoplasm. It is found in the cytoskeleton. Its subcellular location is the cell junction. The protein resides in the adherens junction. The protein localises to the cell membrane. It localises to the nucleus. Functionally, associates with the cytoplasmic domain of a variety of cadherins. The association of catenins to cadherins produces a complex which is linked to the actin filament network, and which seems to be of primary importance for cadherins cell-adhesion properties. Can associate with both E- and N-cadherins. Originally believed to be a stable component of E-cadherin/catenin adhesion complexes and to mediate the linkage of cadherins to the actin cytoskeleton at adherens junctions. In contrast, cortical actin was found to be much more dynamic than E-cadherin/catenin complexes and CTNNA1 was shown not to bind to F-actin when assembled in the complex suggesting a different linkage between actin and adherens junctions components. The homodimeric form may regulate actin filament assembly and inhibit actin branching by competing with the Arp2/3 complex for binding to actin filaments. Involved in the regulation of WWTR1/TAZ, YAP1 and TGFB1-dependent SMAD2 and SMAD3 nuclear accumulation. May play a crucial role in cell differentiation. The polypeptide is Catenin alpha-1 (Oryctolagus cuniculus (Rabbit)).